Reading from the N-terminus, the 133-residue chain is Large ribosomal subunit protein uL11 (133 aa).

Belongs to the universal ribosomal protein uL11 family. As to quaternary structure, part of the ribosomal stalk of the 50S ribosomal subunit. Interacts with L10 and the large rRNA to form the base of the stalk. L10 forms an elongated spine to which 2 L12 dimers bind in a sequential fashion forming a pentameric L10(L12)2(L12)2 complex. One or more lysine residues are methylated.

In terms of biological role, forms part of the ribosomal stalk which helps the ribosome interact with GTP-bound translation factors. In Geobacillus stearothermophilus (Bacillus stearothermophilus), this protein is Large ribosomal subunit protein uL11.